Consider the following 645-residue polypeptide: 1,4-alpha-glucan branching enzyme GlgB (645 aa).

Catalysis depends on Asp-309, which acts as the Nucleophile. Glu-352 serves as the catalytic Proton donor. Positions 619–645 (VKTRKGSKKQDGSKTKVRSNVTSRGKR) are disordered. Polar residues predominate over residues 636–645 (RSNVTSRGKR).

This sequence belongs to the glycosyl hydrolase 13 family. GlgB subfamily. As to quaternary structure, monomer.

It carries out the reaction Transfers a segment of a (1-&gt;4)-alpha-D-glucan chain to a primary hydroxy group in a similar glucan chain.. It participates in glycan biosynthesis; glycogen biosynthesis. Catalyzes the formation of the alpha-1,6-glucosidic linkages in glycogen by scission of a 1,4-alpha-linked oligosaccharide from growing alpha-1,4-glucan chains and the subsequent attachment of the oligosaccharide to the alpha-1,6 position. The polypeptide is 1,4-alpha-glucan branching enzyme GlgB (Bacillus cereus (strain 03BB102)).